A 229-amino-acid chain; its full sequence is 7-cyano-7-deazaguanine synthase (229 aa).

15 to 25 (LSGGLDSATVV) is an ATP binding site. 4 residues coordinate Zn(2+): Cys-194, Cys-204, Cys-207, and Cys-210.

This sequence belongs to the QueC family. Zn(2+) is required as a cofactor.

The catalysed reaction is 7-carboxy-7-deazaguanine + NH4(+) + ATP = 7-cyano-7-deazaguanine + ADP + phosphate + H2O + H(+). The protein operates within purine metabolism; 7-cyano-7-deazaguanine biosynthesis. In terms of biological role, catalyzes the ATP-dependent conversion of 7-carboxy-7-deazaguanine (CDG) to 7-cyano-7-deazaguanine (preQ(0)). The protein is 7-cyano-7-deazaguanine synthase of Pseudomonas syringae pv. syringae (strain B728a).